Consider the following 341-residue polypeptide: HTH-type transcriptional repressor PurR (341 aa).

An HTH lacI-type domain is found at 2 to 56; the sequence is ATIKDVAKHAGVSTTTVSHVINKTRFVAEDTKAAVWAAIKALNYSPSAVARSLKV. Residues 4–23 constitute a DNA-binding region (H-T-H motif); that stretch reads IKDVAKHAGVSTTTVSHVIN. Residues 48–56 mediate DNA binding; sequence SAVARSLKV. The hypoxanthine site is built by Tyr-73, Arg-190, Thr-192, Phe-221, and Asp-275.

As to quaternary structure, homodimer.

It participates in purine metabolism; purine nucleotide biosynthesis [regulation]. Functionally, is the main repressor of the genes involved in the de novo synthesis of purine nucleotides, regulating purB, purC, purEK, purF, purHD, purL, purMN and guaBA expression. PurR is allosterically activated to bind its cognate DNA by binding the purine corepressors, hypoxanthine or guanine, thereby effecting transcription repression. The protein is HTH-type transcriptional repressor PurR of Photorhabdus laumondii subsp. laumondii (strain DSM 15139 / CIP 105565 / TT01) (Photorhabdus luminescens subsp. laumondii).